The primary structure comprises 265 residues: tRNA pseudouridine synthase A (265 aa).

Asp-53 functions as the Nucleophile in the catalytic mechanism. Residue Tyr-111 participates in substrate binding.

The protein belongs to the tRNA pseudouridine synthase TruA family. As to quaternary structure, homodimer.

The catalysed reaction is uridine(38/39/40) in tRNA = pseudouridine(38/39/40) in tRNA. Formation of pseudouridine at positions 38, 39 and 40 in the anticodon stem and loop of transfer RNAs. The protein is tRNA pseudouridine synthase A of Acinetobacter baumannii (strain SDF).